The primary structure comprises 724 residues: Ribosomal RNA large subunit methyltransferase K/L (724 aa).

The THUMP domain maps to 42-153 (DAQRLVLWSR…KGRATLSVDL (112 aa)).

This sequence belongs to the methyltransferase superfamily. RlmKL family.

It is found in the cytoplasm. It carries out the reaction guanosine(2445) in 23S rRNA + S-adenosyl-L-methionine = N(2)-methylguanosine(2445) in 23S rRNA + S-adenosyl-L-homocysteine + H(+). It catalyses the reaction guanosine(2069) in 23S rRNA + S-adenosyl-L-methionine = N(2)-methylguanosine(2069) in 23S rRNA + S-adenosyl-L-homocysteine + H(+). Specifically methylates the guanine in position 2445 (m2G2445) and the guanine in position 2069 (m7G2069) of 23S rRNA. The polypeptide is Ribosomal RNA large subunit methyltransferase K/L (Xylella fastidiosa (strain 9a5c)).